The primary structure comprises 294 residues: Pyridoxal 5'-phosphate synthase subunit PdxS (294 aa).

Residue Asp-24 participates in D-ribose 5-phosphate binding. Lys-81 serves as the catalytic Schiff-base intermediate with D-ribose 5-phosphate. Gly-153 is a D-ribose 5-phosphate binding site. Position 165 (Arg-165) interacts with D-glyceraldehyde 3-phosphate. Residues Gly-214 and 235–236 (GS) each bind D-ribose 5-phosphate.

This sequence belongs to the PdxS/SNZ family. In terms of assembly, in the presence of PdxT, forms a dodecamer of heterodimers.

The enzyme catalyses aldehydo-D-ribose 5-phosphate + D-glyceraldehyde 3-phosphate + L-glutamine = pyridoxal 5'-phosphate + L-glutamate + phosphate + 3 H2O + H(+). The protein operates within cofactor biosynthesis; pyridoxal 5'-phosphate biosynthesis. Its function is as follows. Catalyzes the formation of pyridoxal 5'-phosphate from ribose 5-phosphate (RBP), glyceraldehyde 3-phosphate (G3P) and ammonia. The ammonia is provided by the PdxT subunit. Can also use ribulose 5-phosphate and dihydroxyacetone phosphate as substrates, resulting from enzyme-catalyzed isomerization of RBP and G3P, respectively. The chain is Pyridoxal 5'-phosphate synthase subunit PdxS from Anoxybacillus flavithermus (strain DSM 21510 / WK1).